Here is a 357-residue protein sequence, read N- to C-terminus: Elongation factor Ts (357 aa).

Residues 82–85 are involved in Mg(2+) ion dislocation from EF-Tu; it reads TDFV.

The protein belongs to the EF-Ts family.

It localises to the cytoplasm. Its function is as follows. Associates with the EF-Tu.GDP complex and induces the exchange of GDP to GTP. It remains bound to the aminoacyl-tRNA.EF-Tu.GTP complex up to the GTP hydrolysis stage on the ribosome. The sequence is that of Elongation factor Ts from Campylobacter jejuni subsp. jejuni serotype O:2 (strain ATCC 700819 / NCTC 11168).